Reading from the N-terminus, the 371-residue chain is Probable tRNA sulfurtransferase (371 aa).

Residues 54 to 156 form the THUMP domain; that stretch reads NANIEALSEV…NEMTYFYHKV (103 aa). Residues 174–175, 199–200, lysine 254, glycine 276, and glutamine 285 contribute to the ATP site; these read LF and NF.

This sequence belongs to the ThiI family.

It is found in the cytoplasm. The enzyme catalyses [ThiI sulfur-carrier protein]-S-sulfanyl-L-cysteine + a uridine in tRNA + 2 reduced [2Fe-2S]-[ferredoxin] + ATP + H(+) = [ThiI sulfur-carrier protein]-L-cysteine + a 4-thiouridine in tRNA + 2 oxidized [2Fe-2S]-[ferredoxin] + AMP + diphosphate. The catalysed reaction is [ThiS sulfur-carrier protein]-C-terminal Gly-Gly-AMP + S-sulfanyl-L-cysteinyl-[cysteine desulfurase] + AH2 = [ThiS sulfur-carrier protein]-C-terminal-Gly-aminoethanethioate + L-cysteinyl-[cysteine desulfurase] + A + AMP + 2 H(+). The protein operates within cofactor biosynthesis; thiamine diphosphate biosynthesis. In terms of biological role, catalyzes the ATP-dependent transfer of a sulfur to tRNA to produce 4-thiouridine in position 8 of tRNAs, which functions as a near-UV photosensor. Also catalyzes the transfer of sulfur to the sulfur carrier protein ThiS, forming ThiS-thiocarboxylate. This is a step in the synthesis of thiazole, in the thiamine biosynthesis pathway. The sulfur is donated as persulfide by IscS. The sequence is that of Probable tRNA sulfurtransferase from Saccharolobus solfataricus (strain ATCC 35092 / DSM 1617 / JCM 11322 / P2) (Sulfolobus solfataricus).